Consider the following 269-residue polypeptide: MSNPESLKKQVEPPGYNELFMVEDVCNVDLEQGLDLCKPEKVNKQSQRSRQSRQSLFTNTIKPQKDKMNIKTNKIKEFLNDLFTEFSKFHNSYYPDGRISTRSNFRWPLLIIWSIIIVFAVDKKFEVQKFLSIWINENRFYSEIWVPIAIYVCLLVLMLLSLIFFAEFAVLALRVTGVIIAVLGMIIAVLGMIIAALGATITGLLYFGHWALYKLVILSLGFKIVTPGDVCVSNTLPTHNGETALHSETTVGSDIEQIELQNMPTPVKK.

4 consecutive transmembrane segments (helical) span residues 107–127, 144–164, 177–197, and 201–221; these read WPLL…KFEV, IWVP…SLIF, GVII…IAAL, and ITGL…LSLG.

This sequence belongs to the UPF0494 family.

The protein localises to the vacuole membrane. The protein is UPF0494 membrane protein C1348.01 of Schizosaccharomyces pombe (strain 972 / ATCC 24843) (Fission yeast).